We begin with the raw amino-acid sequence, 528 residues long: PC4 and SFRS1-interacting protein (528 aa).

In terms of domain architecture, PWWP spans 7–64; the sequence is PGDLIFAKMKGYPHWPARVDEVPDGAVKPPTNKLPIFFFGTHETAFLGPKDIFPYSEN. A disordered region spans residues 61 to 348; the sequence is YSENKEKYGK…EKKRETSMDS (288 aa). A Glycyl lysine isopeptide (Lys-Gly) (interchain with G-Cter in SUMO2) cross-link involves residue K75. Polar residues predominate over residues 92–106; the sequence is FSSQQASTKQSNASS. S102, S105, and S106 each carry phosphoserine. Positions 113 to 135 are enriched in basic and acidic residues; sequence KETNVSKEDTDQEEKASNEDVTK. Residues T115 and T122 each carry the phosphothreonine modification. A Phosphoserine modification is found at S129. T141 is subject to Phosphothreonine. The segment covering 144-153 has biased composition (basic residues); sequence AARRGRKRKA. The Nuclear localization signal motif lies at 146–156; it reads RRGRKRKAEKQ. Phosphoserine occurs at positions 176 and 205. A compositionally biased stretch (basic and acidic residues) spans 212-260; sequence DEDKSKKKGPEEKQPKKQLKKEEEGQKEEEKPRKEPDKKEGKKEVESKR. At S270 the chain carries Phosphoserine. At T271 the chain carries Phosphothreonine. Phosphoserine occurs at positions 272 and 274. Positions 285–300 are enriched in basic residues; the sequence is KRKGGRNFQAAHRRNM. Positions 303–348 are enriched in basic and acidic residues; sequence GQHEKEAGDRKRKQEEQMETEQQNKDEGKKPEVKKVEKKRETSMDS. Coiled coils occupy residues 306–332 and 369–393; these read EKEAGDRKRKQEEQMETEQQNKDEGKK and NRCIEALDELASLQVTMQQAQKHTE. Residues 338–415 are integrase-binding domain (IBD); sequence VEKKRETSMD…VSQVIMEKST (78 aa). S432 is subject to Phosphoserine. The residue at position 435 (T435) is a Phosphothreonine. S441 carries the phosphoserine modification. The segment covering 444-471 has biased composition (basic and acidic residues); that stretch reads EQRQHEEANKTKDQGKKGPNKKLEKEPT. The interval 444–528 is disordered; sequence EQRQHEEANK…ISLKESTLDN (85 aa). The span at 472–492 shows a compositional bias: polar residues; it reads GTKSLNGGSDAQESNHPQHNG. Positions 496 to 528 are enriched in basic and acidic residues; the sequence is EDGKDSREASSKTKPPGEEREAEISLKESTLDN. R515 is subject to Citrulline. S520 carries the post-translational modification Phosphoserine. T525 bears the Phosphothreonine mark.

It belongs to the HDGF family. In terms of assembly, monomer. Interacts with IFRD1/PC4. Interacts (via IBD domain) with POGZ (via IBM motif) and CDCA7L (via IBM motifs). Interacts (via IBD domain) with KMT2A (via IBM motifs) with a moderate affinity whereas interacts with the KMT2A-MEN1 complex with a greater affinity; MEN1 enhances interaction of KMT2A with PSIP1. Interacts (via IBD domain) with IWS1 (via IBM motif), MED1 (via IBM motif) and DBF4 (via IBM motifs). Post-translationally, citrullinated by PADI4.

It localises to the nucleus. Its function is as follows. Transcriptional coactivator involved in neuroepithelial stem cell differentiation and neurogenesis. Involved in particular in lens epithelial cell gene regulation and stress responses. May play an important role in lens epithelial to fiber cell terminal differentiation. May play a protective role during stress-induced apoptosis. The protein is PC4 and SFRS1-interacting protein (Psip1) of Mus musculus (Mouse).